Here is a 593-residue protein sequence, read N- to C-terminus: UvrABC system protein C (593 aa).

Residues 14–91 (DKPGCYLMKN…IKEHDPRYNV (78 aa)) form the GIY-YIG domain. A UVR domain is found at 196–231 (EEMKQTLTEKMLQAAENMEFERAKEYRDQIKSIEAV).

The protein belongs to the UvrC family. Interacts with UvrB in an incision complex.

It is found in the cytoplasm. In terms of biological role, the UvrABC repair system catalyzes the recognition and processing of DNA lesions. UvrC both incises the 5' and 3' sides of the lesion. The N-terminal half is responsible for the 3' incision and the C-terminal half is responsible for the 5' incision. The sequence is that of UvrABC system protein C from Brevibacillus brevis (strain 47 / JCM 6285 / NBRC 100599).